The chain runs to 564 residues: 5-hydroxytryptamine receptor 1 (564 aa).

Residues 1–26 are disordered; sequence MALSGQDWRRHQSHRQHRNHRTQGNH. The segment covering 11 to 23 has biased composition (basic residues); the sequence is HQSHRQHRNHRTQ. Residues 29-51 form a helical membrane-spanning segment; the sequence is LISTATLTLFVLFLSSWIAYAAG. 9 tandem repeats follow at residues 89-90, 91-92, 93-94, 95-96, 97-98, 99-100, 101-102, 103-104, and 105-106. Residues 89–106 are 9 X 2 AA tandem repeats of G-S; it reads GSGSGSGSGSGSGSGSGS. Residues 165–188 form a helical membrane-spanning segment; sequence VSIVLLIVILGTVVGNVLVCIAVC. The Cytoplasmic portion of the chain corresponds to 189–198; it reads MVRKLRRPCN. Residues 199-222 traverse the membrane as a helical segment; sequence YLLVSLALSDLCVALLVMPMALLY. At 223–236 the chain is on the extracellular side; the sequence is EVLEKWNFGPLLCD. Cys235 and Cys314 are disulfide-bonded. The chain crosses the membrane as a helical span at residues 237–258; that stretch reads IWVSFDVLCCTASILNLCAISV. Residues 238-247 form an agonist binding region; sequence WVSFDVLCCT. Ergotamine is bound by residues Asp242 and Thr247. A DRY motif; important for ligand-induced conformation changes motif is present at residues 259 to 261; it reads DRY. Topologically, residues 259–278 are cytoplasmic; sequence DRYLAITKPLEYGVKRTPRR. The chain crosses the membrane as a helical span at residues 279–302; sequence MMLCVGIVWLAAACISLPPLLILG. The Extracellular portion of the chain corresponds to 303-330; the sequence is NEHEDEEGQPICTVCQNFAYQIYATLGS. Residues 331-353 form a helical membrane-spanning segment; the sequence is FYIPLSVMLFVYYQIFRAARRIV. Residues 354–454 are Cytoplasmic-facing; it reads LEEKRAQTHL…QLAKEKKAST (101 aa). The tract at residues 367–396 is disordered; sequence LNGTGSPSAPQAPPLGHTELASSGNGQRHS. Positions 386–396 are enriched in polar residues; sequence LASSGNGQRHS. The chain crosses the membrane as a helical span at residues 455-476; that stretch reads TLGIIMSAFTVCWLPFFILALI. The Extracellular segment spans residues 477–487; it reads RPFETMHVPAS. Residues 488–510 traverse the membrane as a helical segment; sequence LSSLFLWLGYANSLLNPIIYATL. The short motif at 503 to 507 is the NPxxY motif; important for ligand-induced conformation changes and signaling element; that stretch reads NPIIY. Residues 511-564 are Cytoplasmic-facing; that stretch reads NRDFRKPFQEILYFRCSSLNTMMRENYYQDQYGEPPSQRVMLGDERHGARESFL.

The protein belongs to the G-protein coupled receptor 1 family. 5-hydroxytryptamine receptor subfamily. As to expression, expressed predominantly in adult heads.

Its subcellular location is the cell membrane. In terms of biological role, G-protein coupled receptor for 5-hydroxytryptamine (serotonin). Also functions as a receptor for various alkaloids. Ligand binding causes a conformation change that triggers signaling via guanine nucleotide-binding proteins (G proteins) and modulates the activity of down-stream effectors, such as adenylate cyclase. Signaling activates adenylate cyclase activity. The sequence is that of 5-hydroxytryptamine receptor 1 (5-HT7) from Drosophila melanogaster (Fruit fly).